Here is a 322-residue protein sequence, read N- to C-terminus: Ferrochelatase (322 aa).

Residues His-194 and Glu-275 each coordinate Fe cation.

Belongs to the ferrochelatase family.

The protein localises to the cytoplasm. The catalysed reaction is heme b + 2 H(+) = protoporphyrin IX + Fe(2+). It functions in the pathway porphyrin-containing compound metabolism; protoheme biosynthesis; protoheme from protoporphyrin-IX: step 1/1. Functionally, catalyzes the ferrous insertion into protoporphyrin IX. The chain is Ferrochelatase from Yersinia enterocolitica.